A 485-amino-acid chain; its full sequence is Ribulose bisphosphate carboxylase large chain (485 aa).

Positions 1–2 are excised as a propeptide; the sequence is MS. Pro3 carries the post-translational modification N-acetylproline. The residue at position 14 (Lys14) is an N6,N6,N6-trimethyllysine. Positions 123 and 173 each coordinate substrate. The Proton acceptor role is filled by Lys175. Lys177 contacts substrate. Positions 201, 203, and 204 each coordinate Mg(2+). Lys201 carries the post-translational modification N6-carboxylysine. The active-site Proton acceptor is the His294. Substrate contacts are provided by Arg295, His327, and Ser379.

The protein belongs to the RuBisCO large chain family. Type I subfamily. As to quaternary structure, heterohexadecamer of 8 large chains and 8 small chains; disulfide-linked. The disulfide link is formed within the large subunit homodimers. It depends on Mg(2+) as a cofactor. The disulfide bond which can form in the large chain dimeric partners within the hexadecamer appears to be associated with oxidative stress and protein turnover.

Its subcellular location is the plastid. The protein resides in the chloroplast. The enzyme catalyses 2 (2R)-3-phosphoglycerate + 2 H(+) = D-ribulose 1,5-bisphosphate + CO2 + H2O. It carries out the reaction D-ribulose 1,5-bisphosphate + O2 = 2-phosphoglycolate + (2R)-3-phosphoglycerate + 2 H(+). Its function is as follows. RuBisCO catalyzes two reactions: the carboxylation of D-ribulose 1,5-bisphosphate, the primary event in carbon dioxide fixation, as well as the oxidative fragmentation of the pentose substrate in the photorespiration process. Both reactions occur simultaneously and in competition at the same active site. In Flaveria pringlei, this protein is Ribulose bisphosphate carboxylase large chain.